Here is a 689-residue protein sequence, read N- to C-terminus: MNQRPIQTATLSWNEQGTPVSEQFGDIYFSNEDGLEETHHVFLKGNGFPARFASHPQQSCIFAETGFGTGLNFLTLWRDFALFRQQSPNATLRRLHYISFEKYPLHVADLASAHARWPELASFAEQLRAQWPLPLAGCHRILLADGAITLDLWFGDVNTLLPTLDDSLNNQVDAWFLDGFAPAKNPDMWNEQLFNAMARMTRPGGTFSTFTAAGFVRRGLQQAGFNVTKVKGFGQKREMLTGTLPQQIHAPTAPWYHRPAATRCDDIAIIGGGIVSALTALALQRRGAVVTLYCADAQPAQGASGNRQGALYPLLNGKNDALETFFTSAFTFARRQYDQLLEQGIAFDHQWCGVSQLAFDDKSRGKIEKMLHTQWPVEFAEAMSREQLSELAGLDCAHDGIHYPAGGWLCPSDLTHALMMLAQQNGMTCHYQHELQRLKRIDSQWQLTFGQSQAAKHHATVILATGHRLPEWEQTHHLPLSAVRGQVSHIPTTPVLSQLQQVLCYDGYLTPVNPANQHHCIGASYQRGDIATDFRLTEQQENRERLLRCLPQVSWPQQVDVSDNQARCGVRCAIRDHLPMVGAVPDYAATLAQYQDLSRRIQHGGESEVNDIAVAPVWPELFMVGGLGSRGLCSAPLVAEILAAQMFGEPLPLDAKTLAALNPNRFWIRKLLKGRPVQTRSPATQESSR.

Residues 1-245 form a tRNA (mnm(5)s(2)U34)-methyltransferase region; sequence MNQRPIQTAT…KREMLTGTLP (245 aa). The tract at residues 270–689 is FAD-dependent cmnm(5)s(2)U34 oxidoreductase; the sequence is IGGGIVSALT…RSPATQESSR (420 aa).

This sequence in the N-terminal section; belongs to the methyltransferase superfamily. tRNA (mnm(5)s(2)U34)-methyltransferase family. The protein in the C-terminal section; belongs to the DAO family. Requires FAD as cofactor.

Its subcellular location is the cytoplasm. The enzyme catalyses 5-aminomethyl-2-thiouridine(34) in tRNA + S-adenosyl-L-methionine = 5-methylaminomethyl-2-thiouridine(34) in tRNA + S-adenosyl-L-homocysteine + H(+). Functionally, catalyzes the last two steps in the biosynthesis of 5-methylaminomethyl-2-thiouridine (mnm(5)s(2)U) at the wobble position (U34) in tRNA. Catalyzes the FAD-dependent demodification of cmnm(5)s(2)U34 to nm(5)s(2)U34, followed by the transfer of a methyl group from S-adenosyl-L-methionine to nm(5)s(2)U34, to form mnm(5)s(2)U34. This Yersinia pestis protein is tRNA 5-methylaminomethyl-2-thiouridine biosynthesis bifunctional protein MnmC.